Reading from the N-terminus, the 271-residue chain is Formamidopyrimidine-DNA glycosylase (271 aa).

The active-site Schiff-base intermediate with DNA is the P2. Residue E3 is the Proton donor of the active site. K57 serves as the catalytic Proton donor; for beta-elimination activity. Residues H90, R109, and K151 each coordinate DNA. Residues 236–270 form an FPG-type zinc finger; that stretch reads HVYGRGSKSCTHCGNLLSEIRLGQRTTVFCGLCQT. R260 acts as the Proton donor; for delta-elimination activity in catalysis.

This sequence belongs to the FPG family. As to quaternary structure, monomer. The cofactor is Zn(2+).

It carries out the reaction Hydrolysis of DNA containing ring-opened 7-methylguanine residues, releasing 2,6-diamino-4-hydroxy-5-(N-methyl)formamidopyrimidine.. The enzyme catalyses 2'-deoxyribonucleotide-(2'-deoxyribose 5'-phosphate)-2'-deoxyribonucleotide-DNA = a 3'-end 2'-deoxyribonucleotide-(2,3-dehydro-2,3-deoxyribose 5'-phosphate)-DNA + a 5'-end 5'-phospho-2'-deoxyribonucleoside-DNA + H(+). In terms of biological role, involved in base excision repair of DNA damaged by oxidation or by mutagenic agents. Acts as a DNA glycosylase that recognizes and removes damaged bases. Has a preference for oxidized purines, such as 7,8-dihydro-8-oxoguanine (8-oxoG). Has AP (apurinic/apyrimidinic) lyase activity and introduces nicks in the DNA strand. Cleaves the DNA backbone by beta-delta elimination to generate a single-strand break at the site of the removed base with both 3'- and 5'-phosphates. This is Formamidopyrimidine-DNA glycosylase from Shewanella denitrificans (strain OS217 / ATCC BAA-1090 / DSM 15013).